The primary structure comprises 477 residues: Bifunctional protein HldE (477 aa).

The segment at 1–318 is ribokinase; the sequence is MKVTLPEFER…ENAVRGRADT (318 aa). Lys-179 carries the N6-acetyllysine modification. Position 195–198 (195–198) interacts with ATP; the sequence is NLSE. Asp-264 is a catalytic residue. The cytidylyltransferase stretch occupies residues 344-477; that stretch reads MTNGVFDILH…IKKIQQDKKG (134 aa).

It in the N-terminal section; belongs to the carbohydrate kinase PfkB family. The protein in the C-terminal section; belongs to the cytidylyltransferase family. Homodimer.

It carries out the reaction D-glycero-beta-D-manno-heptose 7-phosphate + ATP = D-glycero-beta-D-manno-heptose 1,7-bisphosphate + ADP + H(+). The enzyme catalyses D-glycero-beta-D-manno-heptose 1-phosphate + ATP + H(+) = ADP-D-glycero-beta-D-manno-heptose + diphosphate. Its pathway is nucleotide-sugar biosynthesis; ADP-L-glycero-beta-D-manno-heptose biosynthesis; ADP-L-glycero-beta-D-manno-heptose from D-glycero-beta-D-manno-heptose 7-phosphate: step 1/4. The protein operates within nucleotide-sugar biosynthesis; ADP-L-glycero-beta-D-manno-heptose biosynthesis; ADP-L-glycero-beta-D-manno-heptose from D-glycero-beta-D-manno-heptose 7-phosphate: step 3/4. It functions in the pathway bacterial outer membrane biogenesis; LPS core biosynthesis. In terms of biological role, catalyzes the phosphorylation of D-glycero-D-manno-heptose 7-phosphate at the C-1 position to selectively form D-glycero-beta-D-manno-heptose-1,7-bisphosphate. Functionally, catalyzes the ADP transfer from ATP to D-glycero-beta-D-manno-heptose 1-phosphate, yielding ADP-D-glycero-beta-D-manno-heptose. This Escherichia coli O157:H7 protein is Bifunctional protein HldE.